A 114-amino-acid polypeptide reads, in one-letter code: Iron-sulfur cluster insertion protein ErpA (114 aa).

Iron-sulfur cluster is bound by residues cysteine 42, cysteine 106, and cysteine 108.

Belongs to the HesB/IscA family. Homodimer. The cofactor is iron-sulfur cluster.

Functionally, required for insertion of 4Fe-4S clusters for at least IspG. The protein is Iron-sulfur cluster insertion protein ErpA of Wigglesworthia glossinidia brevipalpis.